The primary structure comprises 67 residues: Large ribosomal subunit protein bL35 (67 aa).

The interval 22 to 52 (VLAGPGKKRHNLSARSQKAKRQNRGSQVLTH) is disordered. The segment covering 27–44 (GKKRHNLSARSQKAKRQN) has biased composition (basic residues).

It belongs to the bacterial ribosomal protein bL35 family.

In Granulibacter bethesdensis (strain ATCC BAA-1260 / CGDNIH1), this protein is Large ribosomal subunit protein bL35.